The primary structure comprises 191 residues: Transcriptional activator GvpE1 (191 aa).

A disordered region spans residues 31–51 (SDGASDHADQPPDEGATQRYT). 140-145 (KRKVYR) is a binding site for DNA. The leucine-zipper stretch occupies residues 150 to 181 (EGAFTRIDHMVDQLLLFSLVLKAVMTDCKARQ).

In terms of assembly, interacts with GvpD.

The protein localises to the cytoplasm. Its activity is regulated as follows. The amount of protein that accumulates is controlled by GvpD; GvpD causes a reduction in the amount of GvpE, preventing accumulation of excessive amounts of gas vesicles. In terms of biological role, plays a regulatory role in gas vesicle synthesis, activates transcription of the gvpA operon, and probably of the gvpD operon. Gas vesicles are hollow, gas filled proteinaceous nanostructures found in several microbial planktonic microorganisms. They allow positioning of halobacteria at the optimal depth for growth in the poorly aerated, shallow brine pools of their habitat. Expression of a 9.5 kb p-vac DNA fragment containing 2 divergently transcribed regions (gvpD-gvpE-gvpF-gvpG-gvpH-gvpI-gvpJ-gvpK-gvpL-gvpM and gvpA-gvpC-gvpN-gvpO) allows H.volcanii to produce gas vesicles. A similar region restores gas vesicle production in H.halobium without the p-vac locus, but it still has the c-vac locus. This Halobacterium salinarum (strain ATCC 700922 / JCM 11081 / NRC-1) (Halobacterium halobium) protein is Transcriptional activator GvpE1 (gvpE11).